Reading from the N-terminus, the 415-residue chain is Serine/threonine transporter SstT (415 aa).

A run of 8 helical transmembrane segments spans residues 23 to 43 (ILVG…AAIA), 47 to 67 (LGTL…LMLV), 85 to 105 (ILWL…LFSF), 144 to 164 (ALLK…GFAL), 181 to 201 (AVTF…FGLV), 220 to 240 (LMVL…LIVF), 303 to 323 (GAAI…GIAV), and 333 to 353 (VVAS…LLLI).

The protein belongs to the dicarboxylate/amino acid:cation symporter (DAACS) (TC 2.A.23) family.

The protein localises to the cell inner membrane. The catalysed reaction is L-serine(in) + Na(+)(in) = L-serine(out) + Na(+)(out). The enzyme catalyses L-threonine(in) + Na(+)(in) = L-threonine(out) + Na(+)(out). Functionally, involved in the import of serine and threonine into the cell, with the concomitant import of sodium (symport system). The chain is Serine/threonine transporter SstT from Cronobacter sakazakii (strain ATCC BAA-894) (Enterobacter sakazakii).